A 456-amino-acid chain; its full sequence is MFS-type transporter ppzB (456 aa).

5 helical membrane passes run 1–21 (MGLF…PFIM), 38–58 (GFLA…GWAA), 72–92 (VFLF…LLVV), 125–145 (IGTI…LGGV), and 154–174 (AVFA…GLVI). Residues 206-225 (EAQERTHEGTPLLPQDDDDD) are disordered. The next 6 membrane-spanning stretches (helical) occupy residues 255 to 275 (LAML…ATVP), 284 to 304 (FSSL…FALG), 318 to 338 (AAAT…GLPE), 348 to 368 (VALF…VTSP), 398 to 418 (FGFS…LGGV), and 427 to 447 (VMGA…FLFV).

It belongs to the major facilitator superfamily. TCR/Tet family.

The protein localises to the membrane. Its function is as follows. MFS-type transporter; part of the gene cluster that mediates the biosynthesis of pyrrolopyrazines, secondary metabolites showing insecticidal activity. Probably involved in the secretion of peramine and other pyrrolopyrazines. This chain is MFS-type transporter ppzB (ppzB), found in Metarhizium majus (strain ARSEF 297).